Reading from the N-terminus, the 280-residue chain is Virginiamycin B lyase (280 aa).

H215 contacts substrate. Residue E254 coordinates Mg(2+). H256 functions as the Proton acceptor in the catalytic mechanism. Residue E271 coordinates Mg(2+).

It belongs to the Vgb family. As to quaternary structure, monomer. Requires Mg(2+) as cofactor.

Functionally, inactivates the type B streptogramin antibiotics by linearizing the lactone ring at the ester linkage, generating a free phenylglycine carboxylate and converting the threonyl moiety into 2-amino-butenoic acid. This Mycobacterium sp. (strain KMS) protein is Virginiamycin B lyase.